A 245-amino-acid chain; its full sequence is Acetylglutamate kinase (245 aa).

Substrate contacts are provided by residues 41 to 42 (GG), R63, and N156.

The protein belongs to the acetylglutamate kinase family. ArgB subfamily.

The protein resides in the cytoplasm. The enzyme catalyses N-acetyl-L-glutamate + ATP = N-acetyl-L-glutamyl 5-phosphate + ADP. It functions in the pathway amino-acid biosynthesis; L-arginine biosynthesis; N(2)-acetyl-L-ornithine from L-glutamate: step 2/4. In terms of biological role, catalyzes the ATP-dependent phosphorylation of N-acetyl-L-glutamate. This is Acetylglutamate kinase from Streptococcus gordonii (strain Challis / ATCC 35105 / BCRC 15272 / CH1 / DL1 / V288).